An 89-amino-acid polypeptide reads, in one-letter code: UPF0213 protein HQ_3675A (89 aa).

One can recognise a GIY-YIG domain in the interval 3–78 (DYHYVYIVEC…KSYTREKKQQ (76 aa)).

This sequence belongs to the UPF0213 family.

The protein is UPF0213 protein HQ_3675A of Haloquadratum walsbyi (strain DSM 16790 / HBSQ001).